We begin with the raw amino-acid sequence, 151 residues long: Abdominal ganglion neuropeptide L11 (151 aa).

The N-terminal stretch at 1 to 25 (MPCTPNSHRLLLVTALCLLITSLFA) is a signal peptide.

The protein resides in the secreted. The sequence is that of Abdominal ganglion neuropeptide L11 from Aplysia californica (California sea hare).